The chain runs to 550 residues: Alkaline phosphatase PhoV (550 aa).

The N-terminal stretch at 1–20 (MKIKLLCISLAVLFCSSANA) is a signal peptide. 2 residues coordinate Zn(2+): Asp48 and Thr89. Thr89 functions as the Phosphothreonine intermediate in the catalytic mechanism. Substrate-binding positions include Asn110 and 171–173 (KDR). Positions 313, 317, 360, 361, and 491 each coordinate Zn(2+).

It depends on Zn(2+) as a cofactor.

The protein localises to the cell inner membrane. The catalysed reaction is a phosphate monoester + H2O = an alcohol + phosphate. Subject to competitive inhibition by phosphate. Inhibited by manganese. Magnesium mildly increases enzyme activity when the zinc concentration is suboptimal. Optimal activity is dependent on the presence of 0.01-2% Triton X-100. Triton X-100 at a concentration of 0.05% increases the activity about fivefold relative to that in its absence. The enzyme is even active in Triton X-100 concentrations up to 80%. 50% inhibition by 4 mM EDTA and 50% inhibition by 48 mM sodium citrate. Alkaline phosphatase with broad substrate specificity. This chain is Alkaline phosphatase PhoV, found in Synechococcus elongatus (strain ATCC 33912 / PCC 7942 / FACHB-805) (Anacystis nidulans R2).